Consider the following 563-residue polypeptide: GTPase Obg (563 aa).

Positions 2-168 (SDFVDRVTVH…RDVILELKSI (167 aa)) constitute an Obg domain. In terms of domain architecture, OBG-type G spans 169-349 (ADVALVGFPS…LNFALSALVH (181 aa)). GTP-binding positions include 175-182 (GFPSAGKS), 200-204 (FTTLV), 221-224 (DVPG), 301-304 (NKID), and 330-332 (STA). 2 residues coordinate Mg(2+): Ser-182 and Thr-202. One can recognise an OCT domain in the interval 383–469 (DEGGSALEFT…ARMVEFDWDP (87 aa)). 2 disordered regions span residues 478 to 509 (LDGS…ERRA) and 528 to 563 (ERKA…ETEE). Positions 486–509 (RGKDLRLEEQDPRTHRRSNAERRA) are enriched in basic and acidic residues.

This sequence belongs to the TRAFAC class OBG-HflX-like GTPase superfamily. OBG GTPase family. Monomer. The cofactor is Mg(2+).

It localises to the cytoplasm. An essential GTPase which binds GTP, GDP and possibly (p)ppGpp with moderate affinity, with high nucleotide exchange rates and a fairly low GTP hydrolysis rate. Plays a role in control of the cell cycle, stress response, ribosome biogenesis and in those bacteria that undergo differentiation, in morphogenesis control. The polypeptide is GTPase Obg (Bifidobacterium longum subsp. infantis (strain ATCC 15697 / DSM 20088 / JCM 1222 / NCTC 11817 / S12)).